The sequence spans 350 residues: Probable lactoylglutathione lyase, chloroplastic (350 aa).

The transit peptide at 1-61 (MVRIIPMAAS…KLLRRSVNCL (61 aa)) directs the protein to the chloroplast. 2 consecutive VOC domains span residues 88 to 212 (RMLH…LLER) and 218 to 342 (PLCQ…FVDN). Histidine 91 is a binding site for Zn(2+). Arginine 95 is a substrate binding site. Position 142 (glutamate 142) interacts with Zn(2+). Residues asparagine 146 and histidine 160 each coordinate substrate. Positions 160 and 208 each coordinate Zn(2+). Catalysis depends on glutamate 208, which acts as the Proton donor/acceptor.

This sequence belongs to the glyoxalase I family. It depends on Zn(2+) as a cofactor.

The protein resides in the plastid. The protein localises to the chloroplast stroma. The catalysed reaction is (R)-S-lactoylglutathione = methylglyoxal + glutathione. It functions in the pathway secondary metabolite metabolism; methylglyoxal degradation; (R)-lactate from methylglyoxal: step 1/2. Catalyzes the conversion of hemimercaptal, formed from methylglyoxal and glutathione, to S-lactoylglutathione. The protein is Probable lactoylglutathione lyase, chloroplastic of Arabidopsis thaliana (Mouse-ear cress).